The chain runs to 193 residues: uncharacterized protein (193 aa).

The disordered stretch occupies residues 158-193 (YNPIYDDHNPLPPEKKKSILSRTRSTKLSSGEITPV). Residues 162-174 (YDDHNPLPPEKKK) are compositionally biased toward basic and acidic residues. A compositionally biased stretch (polar residues) spans 177–193 (LSRTRSTKLSSGEITPV).

This is an uncharacterized protein from Micromonas pusilla (Picoplanktonic green alga).